A 387-amino-acid chain; its full sequence is Aminodeoxyfutalosine synthase (387 aa).

In terms of domain architecture, Radical SAM core spans 52–279 (VHFNVNRHLN…ARTQMATGAE (228 aa)). [4Fe-4S] cluster-binding residues include Cys-66, Cys-70, and Cys-73.

The protein belongs to the radical SAM superfamily. MqnE family. The cofactor is [4Fe-4S] cluster.

It catalyses the reaction 3-[(1-carboxyvinyl)-oxy]benzoate + S-adenosyl-L-methionine + H2O = 6-amino-6-deoxyfutalosine + hydrogencarbonate + L-methionine + H(+). Its pathway is quinol/quinone metabolism; menaquinone biosynthesis. Radical SAM enzyme that catalyzes the addition of the adenosyl radical to the double bond of 3-[(1-carboxyvinyl)oxy]benzoate, leading to aminodeoxyfutalosine (AFL), a key intermediate in the formation of menaquinone (MK, vitamin K2) from chorismate. The sequence is that of Aminodeoxyfutalosine synthase from Streptomyces coelicolor (strain ATCC BAA-471 / A3(2) / M145).